A 328-amino-acid polypeptide reads, in one-letter code: Ribosomal RNA small subunit methyltransferase H (328 aa).

Residues 37 to 39 (GGH), Asp-57, Phe-83, Asp-104, and Gln-111 each bind S-adenosyl-L-methionine.

The protein belongs to the methyltransferase superfamily. RsmH family.

It is found in the cytoplasm. It catalyses the reaction cytidine(1402) in 16S rRNA + S-adenosyl-L-methionine = N(4)-methylcytidine(1402) in 16S rRNA + S-adenosyl-L-homocysteine + H(+). Functionally, specifically methylates the N4 position of cytidine in position 1402 (C1402) of 16S rRNA. The polypeptide is Ribosomal RNA small subunit methyltransferase H (Neisseria meningitidis serogroup C / serotype 2a (strain ATCC 700532 / DSM 15464 / FAM18)).